The chain runs to 352 residues: Ion-translocating oxidoreductase complex subunit D (352 aa).

The next 4 helical transmembrane spans lie at 20-40, 42-62, 89-109, and 123-143; these read IMLLVLLAAVPGIAAQLWFFG, GTLVQILLASVSALLAEALVL, IPPLAPWWMVVLGTVFAVIIA, and PAMIGYVVLLISFPVQMTSWL. FMN phosphoryl threonine is present on threonine 187. A run of 5 helical transmembrane segments spans residues 214 to 234, 242 to 262, 267 to 287, 301 to 321, and 322 to 342; these read ILAGAGWQWVNLAWLAGGVWL, WHIPLSFLVTLALCATLGWLF, LASPQIHLLSGATMLGAFFIL, LIFGALAGLLVWLIRSFGGYP, and DGVAFAVLLANITVPLIDYYT.

The protein belongs to the NqrB/RnfD family. In terms of assembly, the complex is composed of six subunits: RsxA, RsxB, RsxC, RsxD, RsxE and RsxG. It depends on FMN as a cofactor.

Its subcellular location is the cell inner membrane. Its function is as follows. Part of a membrane-bound complex that couples electron transfer with translocation of ions across the membrane. Required to maintain the reduced state of SoxR. This chain is Ion-translocating oxidoreductase complex subunit D, found in Escherichia coli O17:K52:H18 (strain UMN026 / ExPEC).